The following is a 322-amino-acid chain: MVNISTINWVFVCGLSFCLGGIAVLSLMPLGSDCVCPLSNPLAKLAGGGEGVSVIKKEPADEKQPQPHDHGASVHKMALLVPFRDRFEELLQFVPHMTAFLKRQGVAHHIFVLNQVDRFRFNRASLINVGFQFASDVYDYIAMHDVDLLPLNDNLLYEYPSSLGPLHIAGPKLHPKYHYDNFVGGILLVRREHFKQMNGMSNQYWGWGLEDDEFFVRIRDAGLQVTRPQNIKTGTNDTFSHIHNRYHRKRDTQKCFNQKEMTRKRDHKTGLDNVKYKILKVHEMLIDQVPVTILNILLDCDVNKTPWCDCSGTAAAASAVQT.

Over Met-1–Trp-9 the chain is Cytoplasmic. The chain crosses the membrane as a helical; Signal-anchor for type II membrane protein span at residues Val-10–Leu-30. The Lumenal portion of the chain corresponds to Gly-31–Thr-322. UDP-alpha-D-galactose-binding residues include Pro-82, Arg-84, Asp-145, and Val-146. Asp-147 serves as a coordination point for Mn(2+). 4 residues coordinate UDP-alpha-D-galactose: Tyr-177, Gly-185, Trp-207, and Gly-208. Leu-209 is a beta-D-xylose binding site. Glu-210 serves as a coordination point for UDP-alpha-D-galactose. 2 residues coordinate beta-D-xylose: Asp-211 and Asp-212. A glycan (N-linked (GlcNAc...) asparagine) is linked at Asn-236. Residues His-241, His-243, and Arg-250 each coordinate UDP-alpha-D-galactose. Residues His-241 and His-243 each contribute to the Mn(2+) site. 2 cysteine pairs are disulfide-bonded: Cys-255–Cys-310 and Cys-300–Cys-308.

This sequence belongs to the glycosyltransferase 7 family. Requires Mn(2+) as cofactor. Expressed in male and female adults. Expressed in head.

It is found in the golgi apparatus membrane. The catalysed reaction is 3-O-(beta-D-xylosyl)-L-seryl-[protein] + UDP-alpha-D-galactose = 3-O-(beta-D-galactosyl-(1-&gt;4)-beta-D-xylosyl)-L-seryl-[protein] + UDP + H(+). It participates in protein modification; protein glycosylation. Its function is as follows. Transfers galactose from UDP-D-Galactose (UDP-Gal) to the acceptor xylose residue in the linkage tetrasaccharide region of the glycosaminoglycan side chain of proteoglycans. No activity towards beta-GlcNAc, beta-Glc, beta-Gal, and beta-GalNAc as acceptors. In Drosophila melanogaster (Fruit fly), this protein is Beta-1,4-galactosyltransferase 7.